The primary structure comprises 1446 residues: ABC-type transporter oblD (1446 aa).

N-linked (GlcNAc...) asparagine glycosylation is found at N9, N28, N222, N281, and N305. Positions 104–357 (LEVLSLVSKA…FLDMGFVCPD (254 aa)) constitute an ABC transporter 1 domain. The next 6 membrane-spanning stretches (helical) occupy residues 468–488 (VTISSVFGNTIISLVIASIFY), 502–522 (ALLFFAVLMNALGCGLEMLTL), 548–568 (MIMDLPYKIINAITSNIVLYF), 577–597 (GAFFFFVFTSFVLTLTMSMFF), 610–630 (ALPFSAVLLLGLSMYTGFTIP), and 719–739 (IGVIFAYMFLLAAVYLVATDF). In terms of domain architecture, ABC transporter 2 spans 796–1038 (FQWKDVCFDI…ILIDYFVRNG (243 aa)). ATP is bound at residue 832-839 (GVSGAGKT). Transmembrane regions (helical) follow at residues 1147–1167 (ALCVLSALFVGFSLFHTPNTI), 1177–1197 (IFMLLTVFGQLIQQIMPHFVA), 1217–1237 (FIISNIVVELPWNSLMSVLMF), 1265–1285 (LMVWTFLLFSSTFAHFMIAAF), and 1301–1321 (LCLIFCGVLATPGQLPGFWIF). N-linked (GlcNAc...) asparagine glycans are attached at residues N1344 and N1359. Residues 1412 to 1432 (FGLMWVFIVFNIFAACLLYWW) form a helical membrane-spanning segment.

It belongs to the ABC transporter superfamily. ABCG family. PDR (TC 3.A.1.205) subfamily.

It localises to the cell membrane. In terms of biological role, ABC-type transporter; part of the gene cluster that mediates the biosynthesis of the sesterterpenes ophiobolins, fungal phytotoxins with potential anti-cancer activities. Acts as a specific transporter involved in ophiobolins secretion. The chain is ABC-type transporter oblD from Aspergillus clavatus (strain ATCC 1007 / CBS 513.65 / DSM 816 / NCTC 3887 / NRRL 1 / QM 1276 / 107).